A 344-amino-acid polypeptide reads, in one-letter code: TATA box-binding protein-like 2 (344 aa).

Residues 78 to 143 form a disordered region; it reads NKDRTVTGNK…SNQLSSETPN (66 aa). Over residues 110 to 120 the composition is skewed to low complexity; sequence GSGLNLNSNSS. Over residues 134 to 143 the composition is skewed to polar residues; sequence SNQLSSETPN.

The protein belongs to the TBP family. As to quaternary structure, interacts with TAF3.

Its subcellular location is the cytoplasm. The protein resides in the nucleus. Transcription factor required in complex with TAF3 for the differentiation of myoblasts into myocytes. The complex replaces TFIID at specific promoters at an early stage in the differentiation process. The polypeptide is TATA box-binding protein-like 2 (Rattus norvegicus (Rat)).